A 267-amino-acid chain; its full sequence is Thymidylate synthase (267 aa).

DUMP is bound at residue R25. H55 contributes to the (6R)-5,10-methylene-5,6,7,8-tetrahydrofolate binding site. Residue 130 to 131 (RR) coordinates dUMP. C150 (nucleophile) is an active-site residue. Residues 170-173 (RSAD), N181, and 211-213 (HIY) each bind dUMP. D173 is a binding site for (6R)-5,10-methylene-5,6,7,8-tetrahydrofolate. A266 is a binding site for (6R)-5,10-methylene-5,6,7,8-tetrahydrofolate.

It belongs to the thymidylate synthase family. Bacterial-type ThyA subfamily. As to quaternary structure, homodimer.

The protein localises to the cytoplasm. It catalyses the reaction dUMP + (6R)-5,10-methylene-5,6,7,8-tetrahydrofolate = 7,8-dihydrofolate + dTMP. It participates in pyrimidine metabolism; dTTP biosynthesis. Functionally, catalyzes the reductive methylation of 2'-deoxyuridine-5'-monophosphate (dUMP) to 2'-deoxythymidine-5'-monophosphate (dTMP) while utilizing 5,10-methylenetetrahydrofolate (mTHF) as the methyl donor and reductant in the reaction, yielding dihydrofolate (DHF) as a by-product. This enzymatic reaction provides an intracellular de novo source of dTMP, an essential precursor for DNA biosynthesis. The protein is Thymidylate synthase of Corynebacterium efficiens (strain DSM 44549 / YS-314 / AJ 12310 / JCM 11189 / NBRC 100395).